Here is a 164-residue protein sequence, read N- to C-terminus: Probable Brix domain-containing ribosomal biogenesis protein (164 aa).

The Brix domain occupies 1-164 (MIITTSRKPS…IKTVKILDIE (164 aa)).

Probably involved in the biogenesis of the ribosome. The sequence is that of Probable Brix domain-containing ribosomal biogenesis protein from Methanococcus maripaludis (strain DSM 14266 / JCM 13030 / NBRC 101832 / S2 / LL).